The primary structure comprises 199 residues: Large ribosomal subunit protein bL9 (199 aa).

A compositionally biased stretch (basic and acidic residues) spans 149-166 (AEAERINRGEDINSRQED). A disordered region spans residues 149-199 (AEAERINRGEDINSRQEDQDAAAEAIAAAGEFFDPEAQDETPETEAASEQQ). The span at 181–191 (FDPEAQDETPE) shows a compositional bias: acidic residues.

This sequence belongs to the bacterial ribosomal protein bL9 family.

Binds to the 23S rRNA. The polypeptide is Large ribosomal subunit protein bL9 (Afipia carboxidovorans (strain ATCC 49405 / DSM 1227 / KCTC 32145 / OM5) (Oligotropha carboxidovorans)).